The sequence spans 198 residues: MRLCDKDIEQYLDDEKIIIEPKPDSSMISGVSVDIRLGNEFRVFQDHTAPYIDLSAPKGEVQEAMNSIMSDEIFIADGDAFFLHPGELALAVTYESVTLPDNIVGWLDGRSSLARLGLMVHVTAHRIDPGWSGQIVLEFYNSGKLPLALRPKMKIAALNFETMSSSAARPYNKREDAKYRDQKGAVASRISQDEKVNK.

DCTP contacts are provided by residues 110–115 (RSSLAR), D128, 136–138 (VLE), Y171, K178, and Q182. The Proton donor/acceptor role is filled by E138. Residues 168 to 198 (ARPYNKREDAKYRDQKGAVASRISQDEKVNK) are disordered. Residues 172–183 (NKREDAKYRDQK) are compositionally biased toward basic and acidic residues.

The protein belongs to the dCTP deaminase family. As to quaternary structure, homotrimer.

The catalysed reaction is dCTP + H2O + H(+) = dUTP + NH4(+). Its pathway is pyrimidine metabolism; dUMP biosynthesis; dUMP from dCTP (dUTP route): step 1/2. Its function is as follows. Catalyzes the deamination of dCTP to dUTP. In Colwellia psychrerythraea (strain 34H / ATCC BAA-681) (Vibrio psychroerythus), this protein is dCTP deaminase.